The chain runs to 99 residues: Nucleoid-associated protein UUR10_0100 (99 aa).

Belongs to the YbaB/EbfC family. As to quaternary structure, homodimer.

The protein resides in the cytoplasm. The protein localises to the nucleoid. Binds to DNA and alters its conformation. May be involved in regulation of gene expression, nucleoid organization and DNA protection. In Ureaplasma urealyticum serovar 10 (strain ATCC 33699 / Western), this protein is Nucleoid-associated protein UUR10_0100.